The sequence spans 233 residues: Movement and silencing protein TGBp1 (233 aa).

The 133-residue stretch at 1–133 folds into the (+)RNA virus helicase ATP-binding domain; sequence MNHFINLLVA…CKLLSSLGIK (133 aa). The (+)RNA virus helicase C-terminal domain maps to 134–233; that stretch reads VESHRRDRDV…EFPHTTSRPQ (100 aa).

Belongs to the Tymovirales TGBp1 protein family. Homodimer and homooligomer. Interacts with capsid protein. Interacts with host AGO1; this interaction targets the host protein for degradation, thereby suppressing the antiviral RNA silencing.

It localises to the host cytoplasm. Transports viral genome to neighboring plant cells directly through plasmosdesmata, without any budding. The movement protein allows efficient cell to cell propagation, by bypassing the host cell wall barrier. Increases plasmodesma size exclusion limit. Acts as a suppressor of RNA-mediated gene silencing, also known as post-transcriptional gene silencing (PTGS), a mechanism of plant viral defense that limits the accumulation of viral RNAs. This is Movement and silencing protein TGBp1 from Carica papaya (Papaya).